Here is a 181-residue protein sequence, read N- to C-terminus: MSSLSVYHVSSPDLPNKVLTHFDDIAATLAEQGIRFDRWPATTRVAPGTSQQEVICAYQEQVDRLMTEGGYASVDVISLDEDHPRKAELRASFLDEHRHSEDEVRFFVAGRGLFNLHIDDYVYAVLCERNDLISVPAGTAHWFDMGERPNLVAIRMFNNPQGWNASLTGDAIASQFPRLDD.

Fe(2+) is bound by residues His97, His99, Glu103, and His141. 4 residues coordinate Ni(2+): His97, His99, Glu103, and His141.

The protein belongs to the acireductone dioxygenase (ARD) family. Monomer. Fe(2+) serves as cofactor. Ni(2+) is required as a cofactor.

The catalysed reaction is 1,2-dihydroxy-5-(methylsulfanyl)pent-1-en-3-one + O2 = 3-(methylsulfanyl)propanoate + CO + formate + 2 H(+). The enzyme catalyses 1,2-dihydroxy-5-(methylsulfanyl)pent-1-en-3-one + O2 = 4-methylsulfanyl-2-oxobutanoate + formate + 2 H(+). The protein operates within amino-acid biosynthesis; L-methionine biosynthesis via salvage pathway; L-methionine from S-methyl-5-thio-alpha-D-ribose 1-phosphate: step 5/6. In terms of biological role, catalyzes 2 different reactions between oxygen and the acireductone 1,2-dihydroxy-3-keto-5-methylthiopentene (DHK-MTPene) depending upon the metal bound in the active site. Fe-containing acireductone dioxygenase (Fe-ARD) produces formate and 2-keto-4-methylthiobutyrate (KMTB), the alpha-ketoacid precursor of methionine in the methionine recycle pathway. Ni-containing acireductone dioxygenase (Ni-ARD) produces methylthiopropionate, carbon monoxide and formate, and does not lie on the methionine recycle pathway. The chain is Acireductone dioxygenase from Pseudomonas fluorescens (strain ATCC BAA-477 / NRRL B-23932 / Pf-5).